Consider the following 407-residue polypeptide: 1-deoxy-D-xylulose 5-phosphate reductoisomerase (407 aa).

Positions 25, 26, 27, 28, 53, and 136 each coordinate NADPH. K137 contacts 1-deoxy-D-xylulose 5-phosphate. E138 provides a ligand contact to NADPH. A Mn(2+)-binding site is contributed by D162. The 1-deoxy-D-xylulose 5-phosphate site is built by S163, E164, S188, and H211. Residue E164 coordinates Mn(2+). G217 contributes to the NADPH binding site. 1-deoxy-D-xylulose 5-phosphate-binding residues include S224, N229, K230, and E233. Mn(2+) is bound at residue E233.

This sequence belongs to the DXR family. It depends on Mg(2+) as a cofactor. Requires Mn(2+) as cofactor.

It catalyses the reaction 2-C-methyl-D-erythritol 4-phosphate + NADP(+) = 1-deoxy-D-xylulose 5-phosphate + NADPH + H(+). It functions in the pathway isoprenoid biosynthesis; isopentenyl diphosphate biosynthesis via DXP pathway; isopentenyl diphosphate from 1-deoxy-D-xylulose 5-phosphate: step 1/6. Functionally, catalyzes the NADPH-dependent rearrangement and reduction of 1-deoxy-D-xylulose-5-phosphate (DXP) to 2-C-methyl-D-erythritol 4-phosphate (MEP). This chain is 1-deoxy-D-xylulose 5-phosphate reductoisomerase, found in Rhodopseudomonas palustris (strain HaA2).